Here is a 396-residue protein sequence, read N- to C-terminus: Chorismate synthase (396 aa).

Arginine 41 and arginine 47 together coordinate NADP(+). FMN is bound by residues 130-132 (RAS), glycine 298, 313-317 (KPIPT), and arginine 339.

This sequence belongs to the chorismate synthase family. Homotetramer. FMNH2 is required as a cofactor.

The catalysed reaction is 5-O-(1-carboxyvinyl)-3-phosphoshikimate = chorismate + phosphate. It functions in the pathway metabolic intermediate biosynthesis; chorismate biosynthesis; chorismate from D-erythrose 4-phosphate and phosphoenolpyruvate: step 7/7. Catalyzes the anti-1,4-elimination of the C-3 phosphate and the C-6 proR hydrogen from 5-enolpyruvylshikimate-3-phosphate (EPSP) to yield chorismate, which is the branch point compound that serves as the starting substrate for the three terminal pathways of aromatic amino acid biosynthesis. This reaction introduces a second double bond into the aromatic ring system. The protein is Chorismate synthase of Syntrophomonas wolfei subsp. wolfei (strain DSM 2245B / Goettingen).